The primary structure comprises 364 residues: UDP-N-acetylenolpyruvoylglucosamine reductase (364 aa).

The FAD-binding PCMH-type domain maps to 30-196 (LGGPATRLIT…LRVRFELEDA (167 aa)). Arg173 is a catalytic residue. Ser252 (proton donor) is an active-site residue. Residue Glu356 is part of the active site.

The protein belongs to the MurB family. The cofactor is FAD.

It localises to the cytoplasm. The enzyme catalyses UDP-N-acetyl-alpha-D-muramate + NADP(+) = UDP-N-acetyl-3-O-(1-carboxyvinyl)-alpha-D-glucosamine + NADPH + H(+). It participates in cell wall biogenesis; peptidoglycan biosynthesis. Cell wall formation. In Streptomyces avermitilis (strain ATCC 31267 / DSM 46492 / JCM 5070 / NBRC 14893 / NCIMB 12804 / NRRL 8165 / MA-4680), this protein is UDP-N-acetylenolpyruvoylglucosamine reductase.